Reading from the N-terminus, the 248-residue chain is Cell division protein ZapD (248 aa).

The protein belongs to the ZapD family. In terms of assembly, interacts with FtsZ.

It localises to the cytoplasm. Functionally, cell division factor that enhances FtsZ-ring assembly. Directly interacts with FtsZ and promotes bundling of FtsZ protofilaments, with a reduction in FtsZ GTPase activity. This is Cell division protein ZapD from Aliivibrio salmonicida (strain LFI1238) (Vibrio salmonicida (strain LFI1238)).